The primary structure comprises 459 residues: tRNA modification GTPase MnmE (459 aa).

(6S)-5-formyl-5,6,7,8-tetrahydrofolate is bound by residues R22, E85, and R124. One can recognise a TrmE-type G domain in the interval 221-380; sequence GLSTVIVGRP…LEIQIKDLFF (160 aa). N231 serves as a coordination point for K(+). Residues 231-236, 250-256, and 275-278 each bind GTP; these read NVGKSS, TEVAGTT, and DTAG. Mg(2+) is bound at residue S235. Residues T250, V252, and T255 each contribute to the K(+) site. T256 provides a ligand contact to Mg(2+). K459 contacts (6S)-5-formyl-5,6,7,8-tetrahydrofolate.

The protein belongs to the TRAFAC class TrmE-Era-EngA-EngB-Septin-like GTPase superfamily. TrmE GTPase family. As to quaternary structure, homodimer. Heterotetramer of two MnmE and two MnmG subunits. Requires K(+) as cofactor.

It localises to the cytoplasm. In terms of biological role, exhibits a very high intrinsic GTPase hydrolysis rate. Involved in the addition of a carboxymethylaminomethyl (cmnm) group at the wobble position (U34) of certain tRNAs, forming tRNA-cmnm(5)s(2)U34. The protein is tRNA modification GTPase MnmE of Staphylococcus epidermidis (strain ATCC 35984 / DSM 28319 / BCRC 17069 / CCUG 31568 / BM 3577 / RP62A).